We begin with the raw amino-acid sequence, 269 residues long: Transmembrane protein 41B (269 aa).

Transmembrane regions (helical) follow at residues 30–50 (TSLL…FLVY), 87–107 (FYVQ…TFAI), 125–147 (LALF…LSYL), 175–195 (LINY…FINI), 203–223 (PLKV…FVAI), and 240–260 (SWNS…PALF). Residues 118–229 (GFLYPFPLAL…FVAIKAGTTL (112 aa)) are VTT domain; required for its function in autophagy.

This sequence belongs to the TMEM41 family.

The protein resides in the endoplasmic reticulum membrane. It localises to the endomembrane system. The enzyme catalyses a 1,2-diacyl-sn-glycero-3-phospho-L-serine(in) = a 1,2-diacyl-sn-glycero-3-phospho-L-serine(out). It carries out the reaction cholesterol(in) = cholesterol(out). It catalyses the reaction a 1,2-diacyl-sn-glycero-3-phosphocholine(in) = a 1,2-diacyl-sn-glycero-3-phosphocholine(out). The catalysed reaction is a 1,2-diacyl-sn-glycero-3-phosphoethanolamine(in) = a 1,2-diacyl-sn-glycero-3-phosphoethanolamine(out). Phospholipid scramblase involved in lipid homeostasis and membrane dynamics processes. Has phospholipid scramblase activity toward cholesterol and phosphatidylserine, as well as phosphatidylethanolamine and phosphatidylcholine. Required for autophagosome formation: participates in early stages of autophagosome biogenesis at the endoplasmic reticulum (ER) membrane by reequilibrating the leaflets of the ER as lipids are extracted by ATG2 (ATG2A or ATG2B) to mediate autophagosome assembly. In addition to autophagy, involved in other processes in which phospholipid scramblase activity is required. Required for normal motor neuron development. This chain is Transmembrane protein 41B, found in Gallus gallus (Chicken).